A 499-amino-acid polypeptide reads, in one-letter code: Guanosine-5'-triphosphate,3'-diphosphate pyrophosphatase (499 aa).

The protein belongs to the GppA/Ppx family. GppA subfamily.

The catalysed reaction is guanosine 3'-diphosphate 5'-triphosphate + H2O = guanosine 3',5'-bis(diphosphate) + phosphate + H(+). It participates in purine metabolism; ppGpp biosynthesis; ppGpp from GTP: step 2/2. Functionally, catalyzes the conversion of pppGpp to ppGpp. Guanosine pentaphosphate (pppGpp) is a cytoplasmic signaling molecule which together with ppGpp controls the 'stringent response', an adaptive process that allows bacteria to respond to amino acid starvation, resulting in the coordinated regulation of numerous cellular activities. The sequence is that of Guanosine-5'-triphosphate,3'-diphosphate pyrophosphatase from Klebsiella pneumoniae subsp. pneumoniae (strain ATCC 700721 / MGH 78578).